Reading from the N-terminus, the 227-residue chain is Deoxyribose-phosphate aldolase (227 aa).

Asp96 serves as the catalytic Proton donor/acceptor. Lys158 functions as the Schiff-base intermediate with acetaldehyde in the catalytic mechanism. Catalysis depends on Lys187, which acts as the Proton donor/acceptor.

This sequence belongs to the DeoC/FbaB aldolase family. DeoC type 1 subfamily.

The protein resides in the cytoplasm. It catalyses the reaction 2-deoxy-D-ribose 5-phosphate = D-glyceraldehyde 3-phosphate + acetaldehyde. The protein operates within carbohydrate degradation; 2-deoxy-D-ribose 1-phosphate degradation; D-glyceraldehyde 3-phosphate and acetaldehyde from 2-deoxy-alpha-D-ribose 1-phosphate: step 2/2. Functionally, catalyzes a reversible aldol reaction between acetaldehyde and D-glyceraldehyde 3-phosphate to generate 2-deoxy-D-ribose 5-phosphate. The protein is Deoxyribose-phosphate aldolase of Desulfotalea psychrophila (strain LSv54 / DSM 12343).